We begin with the raw amino-acid sequence, 514 residues long: Na(+)/H(+) antiporter NhaB (514 aa).

12 helical membrane passes run 23–43 (LALL…PFIA), 52–72 (IFTL…LLAI), 97–117 (LLLM…LFIF), 120–140 (LLLS…AAAF), 144–164 (FLDA…FYGI), 202–222 (LMMH…VGEP), 238–258 (FFLR…LTCL), 303–323 (ALIG…VGLI), 353–373 (FTAL…QSLF), 391–411 (LFYL…VGTI), 447–467 (ATPN…APLI), and 475–495 (VWMA…CVEF).

This sequence belongs to the NhaB Na(+)/H(+) (TC 2.A.34) antiporter family.

The protein localises to the cell inner membrane. It carries out the reaction 2 Na(+)(in) + 3 H(+)(out) = 2 Na(+)(out) + 3 H(+)(in). Functionally, na(+)/H(+) antiporter that extrudes sodium in exchange for external protons. This chain is Na(+)/H(+) antiporter NhaB, found in Escherichia fergusonii (strain ATCC 35469 / DSM 13698 / CCUG 18766 / IAM 14443 / JCM 21226 / LMG 7866 / NBRC 102419 / NCTC 12128 / CDC 0568-73).